The sequence spans 151 residues: Transcriptional regulator MraZ (151 aa).

SpoVT-AbrB domains follow at residues 5 to 51 and 81 to 124; these read AHEL…PVAE and AEIL…GREQ.

This sequence belongs to the MraZ family. In terms of assembly, forms oligomers.

Its subcellular location is the cytoplasm. It localises to the nucleoid. The sequence is that of Transcriptional regulator MraZ from Neisseria meningitidis serogroup C / serotype 2a (strain ATCC 700532 / DSM 15464 / FAM18).